A 609-amino-acid polypeptide reads, in one-letter code: Proteasome-associated ATPase (609 aa).

The segment at 1–22 (MGESERSEAFNPPREAGMSSGD) is disordered. Residues 20–96 (SGDIAELEQL…LREEVDRLGQ (77 aa)) are a coiled coil. ATP is bound at residue 296-301 (GCGKTL). Residues 608–609 (YL) form a docks into pockets in the proteasome alpha-ring region.

The protein belongs to the AAA ATPase family. Homohexamer. Assembles into a hexameric ring structure that caps the 20S proteasome core. Strongly interacts with the prokaryotic ubiquitin-like protein Pup through a hydrophobic interface; the interacting region of ARC lies in its N-terminal coiled-coil domain. There is one Pup binding site per ARC hexamer ring. Upon ATP-binding, the C-terminus of ARC interacts with the alpha-rings of the proteasome core, possibly by binding to the intersubunit pockets.

Its pathway is protein degradation; proteasomal Pup-dependent pathway. Its function is as follows. ATPase which is responsible for recognizing, binding, unfolding and translocation of pupylated proteins into the bacterial 20S proteasome core particle. May be essential for opening the gate of the 20S proteasome via an interaction with its C-terminus, thereby allowing substrate entry and access to the site of proteolysis. Thus, the C-termini of the proteasomal ATPase may function like a 'key in a lock' to induce gate opening and therefore regulate proteolysis. The protein is Proteasome-associated ATPase of Mycobacterium leprae (strain Br4923).